The chain runs to 67 residues: Large ribosomal subunit protein bL31 (67 aa).

Cys16, Cys18, Cys36, and Cys39 together coordinate Zn(2+).

Belongs to the bacterial ribosomal protein bL31 family. Type A subfamily. In terms of assembly, part of the 50S ribosomal subunit. Zn(2+) serves as cofactor.

Functionally, binds the 23S rRNA. In Treponema pallidum (strain Nichols), this protein is Large ribosomal subunit protein bL31.